The primary structure comprises 1867 residues: MFDYNQLNKLKDKIQSSDGLQIKDRTYLYKTYRSVFVGYECVDWIFGNCPDIKTREDAIKLGQTLFDAGIICNVTSGADPIFKDDYIFYQFDNNKNNNNINNNNNNATSTATTATAPITPVSTKIGSIGKSSSKSSTAVDKMNNNNNNNNNNNNNNNNNNNNNSNNSNSNNNSSRRTSSVPPPVLVTASLSSSTSSSSSSTTSTSSSLASTNTNSNSTYNSNSFNKKHHRYSINELSKVVLEDLNTVTLVKDELIQLSQELMNGDKGLKLQKKKKGAAGTTISCFSGSQLIDWLVKKLEVTRKESIQIASALMHLNIFIEVGTIFNSSNNNNNNNNGGGGVMSSTLSTTIPSSISLQQLSNQSQSNSNSSSSSSILNLSFTAPISISSTTATMSSSLSLSTTAATTTTTTTSSSLLNNSSSGSGFLVPTLPASVLNSSSNSNNQLYSSSPLSLSTSSIPAFDNRIVEDCGNVFYEFLTKPEAIINHVAMRRLDDLCLTHKCISIIPTTIINTSKFLRIIDLSFNQLSESNQLESIATLYNLESCNLSHNQLSTLPSSFSRLELLTKLILSHNCFQVIPNVVFQLSNLEELSLAANQLSSISESIGSLKSLEKLDLSFNKQINKIPKELGLLVRLKSLNVLGSNKINELPSFLSTLPLLEQLDFSRDIIKSPPKEITSKGFTHIIGYLKDLFEGTETLSHIKLMVLGSEKTGRSSLVKALTKSQTKSLSRQSANFLKKVTSSEVSLNDPIEIIQLKLDLPPEQQNGIMTSSSNLNLSTGTLPPPTQLSSSTSELKPQRKDSFGSSMTTPEKKRPTKRNVKLMIYDFRMPSIDVYYHTHQFFLSERAFYLVTYDINKDLSHSGLEFWVESIKKKAPNAPIYIVATHIDTFNQYGGDILVPLNEIDQYLTQRSLEVTGVIGVSSTTLRNIDLLKNEIIQTLLNQSNNNNNNNNNNNYNNNKQSNSISTTNWLNERIPSIYITLETNLQEEAKKRPIVTWDEYQNIAKLSNFTTSSYEKLVRATNTLNRWGSIIWFEDSKSSLKDFVILDPQWFSDCFYKLLLAKHSFINSDGILLLSNLKNIWKPNIVPEQFHIKLLKLLERYQILYTLKNNSNLQQLQQQQQQQKSFGNLSKENSLNSMSYSIESRSSSSPLPTVVTLSAEISSSPSLSLSNSSQSVFTNPNNNNNNKSEQQQQQQQQQQQPQPISTSPKLLRNSLKNLKSIENNSSSLSNNSILNSNSNSSGNLLQNGSYISFNRIIIPCLLPNGKPSHLASLWDTWSGEDEHQIGRYYQFRNISAKNCFERVMVRFLYMMEPIVYWSTGILFRKTQTYRENIKDSMSSCGTLVEFDTVTQQLQIRVRGHEFDACAKLFQIVLENVDTILKDYQINQSQTYIPCSCSCECRDLPHLFPIDLIEETFGKGESHTKCPITMKLVSLCKISPDITLSSVSSNKKVSKEDLIYQEEIGVGGFSRVYKGIYKNNTVAIKQFNFERMDLIDSTSFNNLNSLTISPSNSSLSISLSSSTSSLSPPIVNNNNNNNNLNNNLNNLNNNNKLYIQQQQQTQQNQQQQQQQQQQQQQQQQQQQQQQQQQQQQQQQQQQQNQQQPKILQRNLSTSSLSSNSSQGEDSMNQISSGKLNAINEFRREVWLMSGLSHSNIVLMKGFCFEPYAIVMEYMDIGSLSSFLKKKKEDGQVLDWQMLLKIVTDIASGMAFLHNITPPLVHRDLKSPNILLASHPTNPNEISAKVSDFGLSRSIVQNFSSKVVDNPTWQSPEVLKGMEYNEKSDIYSFGMILWECYHLELPFDEFDFKFMSTLEDNILSGLRPSINQNCNRMYSSLITKCWNADPNLRPSFNSILKTLNEIKDSTINSK.

The 78-residue stretch at 16-93 folds into the DEP 1 domain; that stretch reads SSDGLQIKDR…DDYIFYQFDN (78 aa). Disordered regions lie at residues 96-115 and 121-225; these read NNNNINNNNNNATSTATTAT and VSTK…NSFN. Residues 121-223 are compositionally biased toward low complexity; it reads VSTKIGSIGK…NSNSTYNSNS (103 aa). The 79-residue stretch at 264 to 342 folds into the DEP 2 domain; the sequence is GDKGLKLQKK…NNNNGGGGVM (79 aa). 8 LRR repeats span residues 491-512, 515-536, 540-561, 563-584, 586-607, 609-631, 633-656, and 657-678; these read RLDDLCLTHKCISIIPTTIINT, FLRIIDLSFNQLSESNQLESIA, NLESCNLSHNQLSTLPSSFSRL, LLTKLILSHNCFQVIPNVVFQL, NLEELSLAANQLSSISESIGSL, SLEKLDLSFNKQINKIPKELGLL, RLKSLNVLGSNKINELPSFLSTLP, and LLEQLDFSRDIIKSPPKEITSK. Residues 693–941 form the Roc domain; the sequence is GTETLSHIKL…NEIIQTLLNQ (249 aa). Disordered stretches follow at residues 763 to 813 and 942 to 961; these read QNGI…KKRP and SNNNNNNNNNNNYNNNKQSN. Low complexity predominate over residues 768 to 793; that stretch reads TSSSNLNLSTGTLPPPTQLSSSTSEL. In terms of domain architecture, COR spans 974–1111; sequence PSIYITLETN…ILYTLKNNSN (138 aa). Residues 1163-1207 form a disordered region; that stretch reads SPSLSLSNSSQSVFTNPNNNNNNKSEQQQQQQQQQQQPQPISTSP. One can recognise a Protein kinase domain in the interval 1456 to 1864; that stretch reads LIYQEEIGVG…TLNEIKDSTI (409 aa). Residues 1462–1470 and K1483 contribute to the ATP site; that span reads IGVGGFSRV. The interval 1509–1546 is disordered; that stretch reads SNSSLSISLSSSTSSLSPPIVNNNNNNNNLNNNLNNLN. Catalysis depends on D1721, which acts as the Proton acceptor.

This sequence belongs to the protein kinase superfamily. TKL Ser/Thr protein kinase family. ROCO subfamily.

The catalysed reaction is L-seryl-[protein] + ATP = O-phospho-L-seryl-[protein] + ADP + H(+). The enzyme catalyses L-threonyl-[protein] + ATP = O-phospho-L-threonyl-[protein] + ADP + H(+). The sequence is that of Probable serine/threonine-protein kinase roco8 (roco8) from Dictyostelium discoideum (Social amoeba).